Consider the following 385-residue polypeptide: 1-deoxy-D-xylulose 5-phosphate reductoisomerase (385 aa).

NADPH contacts are provided by T10, G11, S12, I13, K37, and N124. K125 is a 1-deoxy-D-xylulose 5-phosphate binding site. NADPH is bound at residue E126. D150 lines the Mn(2+) pocket. 4 residues coordinate 1-deoxy-D-xylulose 5-phosphate: S151, E152, S176, and H199. E152 is a Mn(2+) binding site. G205 lines the NADPH pocket. Positions 212, 217, 218, and 221 each coordinate 1-deoxy-D-xylulose 5-phosphate. E221 lines the Mn(2+) pocket.

The protein belongs to the DXR family. Mg(2+) serves as cofactor. Mn(2+) is required as a cofactor.

The enzyme catalyses 2-C-methyl-D-erythritol 4-phosphate + NADP(+) = 1-deoxy-D-xylulose 5-phosphate + NADPH + H(+). It functions in the pathway isoprenoid biosynthesis; isopentenyl diphosphate biosynthesis via DXP pathway; isopentenyl diphosphate from 1-deoxy-D-xylulose 5-phosphate: step 1/6. Functionally, catalyzes the NADPH-dependent rearrangement and reduction of 1-deoxy-D-xylulose-5-phosphate (DXP) to 2-C-methyl-D-erythritol 4-phosphate (MEP). This chain is 1-deoxy-D-xylulose 5-phosphate reductoisomerase, found in Clostridium botulinum (strain Langeland / NCTC 10281 / Type F).